The sequence spans 573 residues: Protein FAM200A (573 aa).

Residues 1–51 (MTPESRDTTDLSPRGTQEMEGIVVVKVEEEDEEDHFQKQRNKVESSPQVLS) form a disordered region. Residues 1-513 (MTPESRDTTD…DEFPLLSRKS (513 aa)) are Extracellular-facing. A helical membrane pass occupies residues 514 to 533 (ISLLLPFTTTYLCELGFSIL). Residues 534-573 (TRLKTKKRNRLNSAPDMRVALSSCVPDWKELMNRQAHPSH) are Cytoplasmic-facing.

This sequence belongs to the FAM200 family.

Its subcellular location is the membrane. The sequence is that of Protein FAM200A (FAM200A) from Macaca fascicularis (Crab-eating macaque).